The sequence spans 357 residues: UPF0283 membrane protein BMEI0952 (357 aa).

The tract at residues 1-36 (MSDKTPRKPTAFRLEQPARVSAASEQEEPRRPRAVK) is disordered. The span at 27–36 (EEPRRPRAVK) shows a compositional bias: basic and acidic residues. A run of 2 helical transmembrane segments spans residues 78–98 (ILFGALGILVSFAIGIWTEDL) and 109–129 (LGWTALGVAMVALAAFAAIIL).

This sequence belongs to the UPF0283 family.

It is found in the cell inner membrane. This Brucella melitensis biotype 1 (strain ATCC 23456 / CCUG 17765 / NCTC 10094 / 16M) protein is UPF0283 membrane protein BMEI0952.